Reading from the N-terminus, the 494-residue chain is GTPase Der (494 aa).

2 consecutive EngA-type G domains span residues 3–166 (PVVA…VGEK) and 208–381 (IKLA…ECAT). GTP contacts are provided by residues 9 to 16 (GRPNVGKS), 56 to 60 (DTGGI), 118 to 121 (NKTD), 214 to 221 (GRPNVGKS), 261 to 265 (DTAGV), and 326 to 329 (NKWD). Residues 382 to 466 (RRVNTSMLTK…PIRIQFKEGE (85 aa)) form the KH-like domain.

The protein belongs to the TRAFAC class TrmE-Era-EngA-EngB-Septin-like GTPase superfamily. EngA (Der) GTPase family. As to quaternary structure, associates with the 50S ribosomal subunit.

GTPase that plays an essential role in the late steps of ribosome biogenesis. The sequence is that of GTPase Der from Serratia proteamaculans (strain 568).